Reading from the N-terminus, the 141-residue chain is Large ribosomal subunit protein uL16 (141 aa).

Residues 1–21 (MLMPKRVKYRKQQRGHNRGMA) are disordered.

It belongs to the universal ribosomal protein uL16 family. In terms of assembly, part of the 50S ribosomal subunit.

In terms of biological role, binds 23S rRNA and is also seen to make contacts with the A and possibly P site tRNAs. The protein is Large ribosomal subunit protein uL16 of Roseiflexus sp. (strain RS-1).